The chain runs to 322 residues: tRNA-dihydrouridine synthase B (322 aa).

FMN contacts are provided by residues 16 to 18 (PMA) and Gln70. The active-site Proton donor is Cys100. FMN contacts are provided by residues Lys139, 200 to 202 (NGD), and 224 to 225 (GR).

It belongs to the Dus family. DusB subfamily. It depends on FMN as a cofactor.

The catalysed reaction is a 5,6-dihydrouridine in tRNA + NAD(+) = a uridine in tRNA + NADH + H(+). It carries out the reaction a 5,6-dihydrouridine in tRNA + NADP(+) = a uridine in tRNA + NADPH + H(+). Its function is as follows. Catalyzes the synthesis of 5,6-dihydrouridine (D), a modified base found in the D-loop of most tRNAs, via the reduction of the C5-C6 double bond in target uridines. The protein is tRNA-dihydrouridine synthase B of Vibrio parahaemolyticus serotype O3:K6 (strain RIMD 2210633).